Reading from the N-terminus, the 35-residue chain is Photosystem II reaction center protein Psb30 (35 aa).

A helical membrane pass occupies residues 7–27; sequence VFVQLLLLALIVLAGPAVILL.

Belongs to the Psb30/Ycf12 family. As to quaternary structure, PSII is composed of 1 copy each of membrane proteins PsbA, PsbB, PsbC, PsbD, PsbE, PsbF, PsbH, PsbI, PsbJ, PsbK, PsbL, PsbM, PsbT, PsbX, PsbY, PsbZ, Psb30/Ycf12, peripheral proteins PsbO, CyanoQ (PsbQ), PsbU, PsbV and a large number of cofactors. It forms dimeric complexes.

It localises to the cellular thylakoid membrane. Functionally, a core subunit of photosystem II (PSII), probably helps stabilize the reaction center. The chain is Photosystem II reaction center protein Psb30 from Synechococcus sp. (strain JA-3-3Ab) (Cyanobacteria bacterium Yellowstone A-Prime).